The chain runs to 194 residues: Molybdenum cofactor guanylyltransferase (194 aa).

GTP contacts are provided by residues 12-14 (LAG), lysine 25, asparagine 53, aspartate 71, and aspartate 101. Aspartate 101 is a Mg(2+) binding site.

It belongs to the MobA family. Monomer. An equilibrium exists between a monomeric and oligomeric form of the enzyme, which could be an octamer; whether this oligomeric arrangement is of functional relevance is unclear. Interacts with MoeA and MobB in vivo. Requires Mg(2+) as cofactor. Mn(2+) serves as cofactor.

It localises to the cytoplasm. The catalysed reaction is Mo-molybdopterin + GTP + H(+) = Mo-molybdopterin guanine dinucleotide + diphosphate. Functionally, transfers a GMP moiety from GTP to Mo-molybdopterin (Mo-MPT) cofactor (Moco or molybdenum cofactor) to form Mo-molybdopterin guanine dinucleotide (Mo-MGD) cofactor. Is also involved in the biosynthesis of the bis-MGD form of the Moco cofactor (Mo-bisMGD) in which the metal is symmetrically ligated by the dithiolene groups of two MGD molecules. Is necessary and sufficient for the in vitro activation of the DMSOR molybdoenzyme that uses the Mo-bisMGD form of molybdenum cofactor, which implies formation and efficient insertion of the cofactor into the enzyme without the need of a chaperone. Is specific for GTP since other nucleotides such as ATP and GMP cannot be utilized. This Escherichia coli (strain K12) protein is Molybdenum cofactor guanylyltransferase (mobA).